Here is a 328-residue protein sequence, read N- to C-terminus: scyllo-inositol 2-dehydrogenase (NADP(+)) IolU (328 aa).

This sequence belongs to the Gfo/Idh/MocA family.

The catalysed reaction is scyllo-inositol + NADP(+) = scyllo-inosose + NADPH + H(+). In terms of biological role, catalyzes the NADPH-dependent reduction of scyllo-inosose (SIS) to scyllo-inositol (SI) in vitro, but is unable to dehydrogenate scyllo-inositol and myo-inositol. Is less efficient than the functional paralog IolW. Under physiological conditions, may primarily function as an NADPH-dependent oxidoreductase that reduces carbonyl group(s) in its substrates. Cannot use NADH instead of NADPH. This chain is scyllo-inositol 2-dehydrogenase (NADP(+)) IolU, found in Bacillus subtilis (strain 168).